The chain runs to 719 residues: 1,4-alpha-glucan branching enzyme GlgB (719 aa).

The active-site Nucleophile is aspartate 400. Catalysis depends on glutamate 453, which acts as the Proton donor.

It belongs to the glycosyl hydrolase 13 family. GlgB subfamily. In terms of assembly, monomer.

The catalysed reaction is Transfers a segment of a (1-&gt;4)-alpha-D-glucan chain to a primary hydroxy group in a similar glucan chain.. It functions in the pathway glycan biosynthesis; glycogen biosynthesis. In terms of biological role, catalyzes the formation of the alpha-1,6-glucosidic linkages in glycogen by scission of a 1,4-alpha-linked oligosaccharide from growing alpha-1,4-glucan chains and the subsequent attachment of the oligosaccharide to the alpha-1,6 position. The chain is 1,4-alpha-glucan branching enzyme GlgB from Chlamydia caviae (strain ATCC VR-813 / DSM 19441 / 03DC25 / GPIC) (Chlamydophila caviae).